Consider the following 391-residue polypeptide: 1-deoxy-D-xylulose 5-phosphate reductoisomerase (391 aa).

5 residues coordinate NADPH: Thr-11, Gly-12, Ser-13, Ile-14, and Asn-126. 1-deoxy-D-xylulose 5-phosphate is bound at residue Lys-127. Glu-128 lines the NADPH pocket. Asp-152 provides a ligand contact to Mn(2+). The 1-deoxy-D-xylulose 5-phosphate site is built by Ser-153, Glu-154, Ser-176, and His-199. Position 154 (Glu-154) interacts with Mn(2+). Residue Gly-205 coordinates NADPH. 1-deoxy-D-xylulose 5-phosphate is bound by residues Ser-212, Asn-217, Lys-218, and Glu-221. Glu-221 provides a ligand contact to Mn(2+).

The protein belongs to the DXR family. Mg(2+) serves as cofactor. The cofactor is Mn(2+).

It carries out the reaction 2-C-methyl-D-erythritol 4-phosphate + NADP(+) = 1-deoxy-D-xylulose 5-phosphate + NADPH + H(+). It participates in isoprenoid biosynthesis; isopentenyl diphosphate biosynthesis via DXP pathway; isopentenyl diphosphate from 1-deoxy-D-xylulose 5-phosphate: step 1/6. Its function is as follows. Catalyzes the NADPH-dependent rearrangement and reduction of 1-deoxy-D-xylulose-5-phosphate (DXP) to 2-C-methyl-D-erythritol 4-phosphate (MEP). In Acidithiobacillus ferrooxidans (strain ATCC 53993 / BNL-5-31) (Leptospirillum ferrooxidans (ATCC 53993)), this protein is 1-deoxy-D-xylulose 5-phosphate reductoisomerase.